The following is a 116-amino-acid chain: Putative iron-sulfur cluster insertion protein ErpA (116 aa).

Residues Cys44, Cys108, and Cys110 each contribute to the iron-sulfur cluster site.

It belongs to the HesB/IscA family. In terms of assembly, homodimer. Iron-sulfur cluster is required as a cofactor.

Functionally, required for insertion of 4Fe-4S clusters. The protein is Putative iron-sulfur cluster insertion protein ErpA of Aromatoleum aromaticum (strain DSM 19018 / LMG 30748 / EbN1) (Azoarcus sp. (strain EbN1)).